Here is a 635-residue protein sequence, read N- to C-terminus: Elongation factor 4 (635 aa).

The tr-type G domain occupies 11–193; that stretch reads EKIRNFSIIA…QIVEKVPAPT (183 aa). Residues 23-28 and 140-143 contribute to the GTP site; these read DHGKST and NKID.

The protein belongs to the TRAFAC class translation factor GTPase superfamily. Classic translation factor GTPase family. LepA subfamily.

The protein resides in the cell membrane. The catalysed reaction is GTP + H2O = GDP + phosphate + H(+). Required for accurate and efficient protein synthesis under certain stress conditions. May act as a fidelity factor of the translation reaction, by catalyzing a one-codon backward translocation of tRNAs on improperly translocated ribosomes. Back-translocation proceeds from a post-translocation (POST) complex to a pre-translocation (PRE) complex, thus giving elongation factor G a second chance to translocate the tRNAs correctly. Binds to ribosomes in a GTP-dependent manner. This is Elongation factor 4 from Streptococcus pyogenes serotype M12 (strain MGAS2096).